The sequence spans 183 residues: Beta-defensin 129 (183 aa).

Positions 1-19 (MKLLFPVFASLMLQYQVNT) are cleaved as a signal peptide. 3 disulfides stabilise this stretch: Cys-27–Cys-53, Cys-34–Cys-48, and Cys-38–Cys-54. The disordered stretch occupies residues 141–183 (TATSTKSNTKESRDSATASPPPAPPPPNILPTPSLELEKAEEQ). Positions 159–170 (SPPPAPPPPNIL) are enriched in pro residues.

It belongs to the beta-defensin family.

The protein localises to the secreted. Has antibacterial activity. The polypeptide is Beta-defensin 129 (DEFB129) (Pongo pygmaeus (Bornean orangutan)).